Consider the following 327-residue polypeptide: DNA-directed RNA polymerase subunit alpha (327 aa).

Residues 1–233 (MVREKVKVST…NLFIPFLHVE (233 aa)) form an alpha N-terminal domain (alpha-NTD) region. The alpha C-terminal domain (alpha-CTD) stretch occupies residues 265–327 (KELAFQYIFI…KKILDILEKK (63 aa)).

This sequence belongs to the RNA polymerase alpha chain family. In terms of assembly, in plastids the minimal PEP RNA polymerase catalytic core is composed of four subunits: alpha, beta, beta', and beta''. When a (nuclear-encoded) sigma factor is associated with the core the holoenzyme is formed, which can initiate transcription.

It localises to the plastid. It is found in the chloroplast. The enzyme catalyses RNA(n) + a ribonucleoside 5'-triphosphate = RNA(n+1) + diphosphate. DNA-dependent RNA polymerase catalyzes the transcription of DNA into RNA using the four ribonucleoside triphosphates as substrates. The polypeptide is DNA-directed RNA polymerase subunit alpha (Olimarabidopsis pumila (Dwarf rocket)).